A 622-amino-acid polypeptide reads, in one-letter code: Wall-associated receptor kinase-like 21 (622 aa).

A signal peptide spans 1-21 (MAETPQPYLIFVFFVFTLTVA). Residues 22–247 (TQTTGSVKCK…LVYKRKGLHK (226 aa)) are Extracellular-facing. Residues Asn50, Asn114, Asn131, Asn160, and Asn195 are each glycosylated (N-linked (GlcNAc...) asparagine). A helical membrane pass occupies residues 248–268 (LVVLGTAGILVGVLVIVVLIA). The Cytoplasmic segment spans residues 269 to 622 (TYFFRNKQSA…MKRQQSFPRE (354 aa)). Residues 314-594 (FSDKNMLGTG…EITEDLHRIK (281 aa)) form the Protein kinase domain. ATP is bound by residues 320–328 (LGTGAYGTV) and Lys342. Residue Asp439 is the Proton acceptor of the active site.

Belongs to the protein kinase superfamily. Ser/Thr protein kinase family.

It is found in the membrane. It carries out the reaction L-seryl-[protein] + ATP = O-phospho-L-seryl-[protein] + ADP + H(+). The catalysed reaction is L-threonyl-[protein] + ATP = O-phospho-L-threonyl-[protein] + ADP + H(+). Serine/threonine-protein kinase that may function as a signaling receptor of extracellular matrix component. This is Wall-associated receptor kinase-like 21 (WAKL21) from Arabidopsis thaliana (Mouse-ear cress).